A 538-amino-acid chain; its full sequence is UNC93-like protein (538 aa).

Asn-45 carries an N-linked (GlcNAc...) asparagine glycan. Transmembrane regions (helical) follow at residues 46-66 (ISII…TANL), 80-100 (SLSA…TLII), 105-125 (VKWT…FQLF), 128-148 (FYTL…MWAS), and 170-190 (AIIV…ELWG). The N-linked (GlcNAc...) asparagine glycan is linked to Asn-210. 7 consecutive transmembrane segments (helical) span residues 244-264 (IFEI…IIAF), 305-325 (LLIP…ADFT), 338-358 (IGFV…LFGS), 366-386 (TPII…ELFW), 394-414 (IIFY…QTQI), 435-455 (LWES…CTQM), and 457-477 (LYIL…VEIL).

It belongs to the unc-93 family.

Its subcellular location is the membrane. The polypeptide is UNC93-like protein (Drosophila melanogaster (Fruit fly)).